A 496-amino-acid polypeptide reads, in one-letter code: Glycerol kinase (496 aa).

An ADP-binding site is contributed by threonine 12. The ATP site is built by threonine 12, threonine 13, and serine 14. Threonine 12 is a sn-glycerol 3-phosphate binding site. Arginine 16 contributes to the ADP binding site. The sn-glycerol 3-phosphate site is built by arginine 82, glutamate 83, and tyrosine 134. Residues arginine 82, glutamate 83, and tyrosine 134 each contribute to the glycerol site. At histidine 230 the chain carries Phosphohistidine; by HPr. Aspartate 244 contributes to the sn-glycerol 3-phosphate binding site. Glycerol-binding residues include aspartate 244 and glutamine 245. ADP-binding residues include threonine 266 and glycine 309. ATP contacts are provided by threonine 266, glycine 309, glutamine 313, and glycine 410. ADP contacts are provided by glycine 410 and asparagine 414.

Belongs to the FGGY kinase family. In terms of assembly, homotetramer and homodimer (in equilibrium). The phosphoenolpyruvate-dependent sugar phosphotransferase system (PTS), including enzyme I, and histidine-containing protein (HPr) are required for the phosphorylation, which leads to the activation of the enzyme.

It catalyses the reaction glycerol + ATP = sn-glycerol 3-phosphate + ADP + H(+). It functions in the pathway polyol metabolism; glycerol degradation via glycerol kinase pathway; sn-glycerol 3-phosphate from glycerol: step 1/1. With respect to regulation, activated by phosphorylation and inhibited by fructose 1,6-bisphosphate (FBP). Functionally, key enzyme in the regulation of glycerol uptake and metabolism. Catalyzes the phosphorylation of glycerol to yield sn-glycerol 3-phosphate. This is Glycerol kinase from Bacillus thuringiensis subsp. konkukian (strain 97-27).